A 375-amino-acid chain; its full sequence is Protein SSUH2 homolog (375 aa).

Expressed in enterocytes of small and large intestinal mucosa (at protein level). Expressed in chromaffine and interstitial cells. Expressed in peripheral blood and gingival cells.

It localises to the cytoplasm. The protein localises to the nucleus. Its function is as follows. Plays a role in odontogenesis. This chain is Protein SSUH2 homolog, found in Homo sapiens (Human).